A 365-amino-acid polypeptide reads, in one-letter code: S-adenosylmethionine:tRNA ribosyltransferase-isomerase (365 aa).

It belongs to the QueA family. In terms of assembly, monomer.

It is found in the cytoplasm. It carries out the reaction 7-aminomethyl-7-carbaguanosine(34) in tRNA + S-adenosyl-L-methionine = epoxyqueuosine(34) in tRNA + adenine + L-methionine + 2 H(+). Its pathway is tRNA modification; tRNA-queuosine biosynthesis. Functionally, transfers and isomerizes the ribose moiety from AdoMet to the 7-aminomethyl group of 7-deazaguanine (preQ1-tRNA) to give epoxyqueuosine (oQ-tRNA). The sequence is that of S-adenosylmethionine:tRNA ribosyltransferase-isomerase from Prochlorococcus marinus (strain NATL2A).